The primary structure comprises 271 residues: Energy-coupling factor transporter ATP-binding protein EcfA (271 aa).

One can recognise an ABC transporter domain in the interval 2–231 (ISIQNLTFYY…PLFLQQYKLT (230 aa)). 34 to 41 (GHNGSGKS) serves as a coordination point for ATP.

This sequence belongs to the ABC transporter superfamily. Energy-coupling factor EcfA family. As to quaternary structure, forms a stable energy-coupling factor (ECF) transporter complex composed of 2 membrane-embedded substrate-binding proteins (S component), 2 ATP-binding proteins (A component) and 2 transmembrane proteins (T component).

It localises to the cell membrane. In terms of biological role, ATP-binding (A) component of a common energy-coupling factor (ECF) ABC-transporter complex. Unlike classic ABC transporters this ECF transporter provides the energy necessary to transport a number of different substrates. The polypeptide is Energy-coupling factor transporter ATP-binding protein EcfA (Aster yellows witches'-broom phytoplasma (strain AYWB)).